A 1216-amino-acid chain; its full sequence is 1-phosphatidylinositol 4,5-bisphosphate phosphodiesterase beta-1 (1216 aa).

Cys-17 carries the S-palmitoyl cysteine lipid modification. Ser-236 is subject to Phosphoserine. In terms of domain architecture, PI-PLC X-box spans 316–467 (EDMSQPLSHY…LMYKILVKNK (152 aa)). Catalysis depends on residues His-331 and His-378. Residue Ser-417 is modified to Phosphoserine. The interval 469-534 (KSHKSSEGSG…MDEGTAGSEA (66 aa)) is disordered. A compositionally biased stretch (basic and acidic residues) spans 472–483 (KSSEGSGKKKLS). Residues 491-501 (SDSSSVFEPSS) show a composition bias toward low complexity. Acidic residues predominate over residues 507–518 (ADTESDDDDDDD). Thr-509 is modified (phosphothreonine). Phosphoserine is present on residues Ser-511 and Ser-582. Residues 540–656 (MSNLVNYIQP…GYRLKPEFMR (117 aa)) enclose the PI-PLC Y-box domain. The region spanning 656-784 (RRPDKHFDPF…CLRNERNQPL (129 aa)) is the C2 domain. 4 disordered regions span residues 834 to 891 (DEEE…VKAP), 933 to 993 (LVKR…IEQD), 1071 to 1095 (KMDK…EEEK), and 1172 to 1216 (KISE…DTPL). At Ser-887 the chain carries Phosphoserine; by PKC. Basic and acidic residues-rich tracts occupy residues 941-951 (TTDLIKEHTTK) and 959-979 (YLRR…KKSE). 2 positions are modified to phosphoserine: Ser-978 and Ser-987. Over residues 980-991 (PSSPDHVSSTIE) the composition is skewed to polar residues. Basic and acidic residues predominate over residues 1075-1095 (KRQEKITEAKSKDKSQMEEEK). The segment covering 1187-1198 (TSDSGKLNQKPP) has biased composition (polar residues). Phosphoserine occurs at positions 1199 and 1200. Residues 1207-1216 (NPGKEFDTPL) show a composition bias toward basic and acidic residues.

Interacts with DGKQ. Requires Ca(2+) as cofactor. Palmitoylated. Palmitoylation at Cys-17 by ZDHHC21 regulates the signaling activity of PLCB1 and the function of the endothelial barrier. Palmitoylation by ZDHHC21 is stimulated by inflammation.

It localises to the nucleus membrane. Its subcellular location is the cytoplasm. The catalysed reaction is a 1,2-diacyl-sn-glycero-3-phospho-(1D-myo-inositol-4,5-bisphosphate) + H2O = 1D-myo-inositol 1,4,5-trisphosphate + a 1,2-diacyl-sn-glycerol + H(+). It catalyses the reaction a 1,2-diacyl-sn-glycero-3-phospho-(1D-myo-inositol) + H2O = 1D-myo-inositol 1-phosphate + a 1,2-diacyl-sn-glycerol + H(+). Functionally, catalyzes the hydrolysis of 1-phosphatidylinositol 4,5-bisphosphate into diacylglycerol (DAG) and inositol 1,4,5-trisphosphate (IP3) and mediates intracellular signaling downstream of G protein-coupled receptors. Regulates the function of the endothelial barrier. This chain is 1-phosphatidylinositol 4,5-bisphosphate phosphodiesterase beta-1 (PLCB1), found in Bos taurus (Bovine).